The chain runs to 134 residues: Seminal plasma protein PDC-109 (134 aa).

Residues 1-25 form the signal peptide; that stretch reads MALQLGLFLIWAGVSVFLQLDPVNG. Thr36 is a glycosylation site (O-linked (GalNAc...) threonine). Fibronectin type-II domains lie at 44-88 and 89-134; these read PEDE…YCAQ and RDYA…WKYC. Intrachain disulfides connect Cys49-Cys73, Cys63-Cys86, Cys94-Cys119, and Cys108-Cys134.

The protein belongs to the seminal plasma protein family. Homodimer. In terms of processing, O-linked glycan consists of Gal-GalNAc disaccharide which is modified with a sialic acid residue (macro- and/or microheterogeneity account for differences between BSP-A1 and BSP-A2). As to expression, major component of seminal plasma.

The protein localises to the secreted. Functionally, could enhance the fertilizing capacity of bull spermatozoa upon interaction with heparin-like glycosaminoglycans present in the female genital tract. Exhibits both simulatory and inhibitory actions on the release of pituitary gonadotropins. This Bos taurus (Bovine) protein is Seminal plasma protein PDC-109.